A 473-amino-acid chain; its full sequence is Photosystem II CP43 reaction center protein (473 aa).

Positions Met1–Glu14 are excised as a propeptide. Residue Thr15 is modified to N-acetylthreonine. Thr15 carries the post-translational modification Phosphothreonine. The next 5 helical transmembrane spans lie at Leu69–Ala93, Leu134–Asn155, Lys178–Thr200, Lys255–Ser275, and Trp291–Ala312. Glu367 contacts [CaMn4O5] cluster. Residues Arg447–Pro471 form a helical membrane-spanning segment.

This sequence belongs to the PsbB/PsbC family. PsbC subfamily. As to quaternary structure, PSII is composed of 1 copy each of membrane proteins PsbA, PsbB, PsbC, PsbD, PsbE, PsbF, PsbH, PsbI, PsbJ, PsbK, PsbL, PsbM, PsbT, PsbX, PsbY, PsbZ, Psb30/Ycf12, at least 3 peripheral proteins of the oxygen-evolving complex and a large number of cofactors. It forms dimeric complexes. It depends on Binds multiple chlorophylls and provides some of the ligands for the Ca-4Mn-5O cluster of the oxygen-evolving complex. It may also provide a ligand for a Cl- that is required for oxygen evolution. PSII binds additional chlorophylls, carotenoids and specific lipids. as a cofactor.

It is found in the plastid. It localises to the chloroplast thylakoid membrane. One of the components of the core complex of photosystem II (PSII). It binds chlorophyll and helps catalyze the primary light-induced photochemical processes of PSII. PSII is a light-driven water:plastoquinone oxidoreductase, using light energy to abstract electrons from H(2)O, generating O(2) and a proton gradient subsequently used for ATP formation. The protein is Photosystem II CP43 reaction center protein of Capsella bursa-pastoris (Shepherd's purse).